The primary structure comprises 37 residues: Conotoxin r11e (37 aa).

Disulfide bonds link C2–C16, C9–C21, C15–C26, and C20–C33. 4-carboxyglutamate is present on residues E13 and E14. W34 bears the 6'-bromotryptophan mark.

As to expression, expressed by the venom duct.

The protein localises to the secreted. In terms of biological role, causes hyperactivity, circular motion, convulsion, urination and death, when injected into 13- to 15-day-old mice. Causes gasping, backward swimming or swimming in a vertical direction and death, when intraperitoneally injected into goldfish. The protein is Conotoxin r11e of Conus radiatus (Rayed cone).